The sequence spans 424 residues: Mitogen-activated protein kinase mpkA (424 aa).

The region spanning 23 to 314 (YNVTKELGQG…VEEALEHPYL (292 aa)) is the Protein kinase domain. Residues 29 to 37 (LGQGAYGIV) and Lys-52 each bind ATP. Residues 375 to 424 (QQIAQQTNVPIPDHQQGGWKQEEPKPQEVHAAGGHVNDLESSLQRGMDVQ) are disordered.

Belongs to the protein kinase superfamily. Ser/Thr protein kinase family. In terms of assembly, interacts with flbB, flbC, brlA, and rasB. Interacts with fmqA and fmqC. Interacts with hsp90. The cofactor is Mg(2+). Phosphorylated by the upstreamm MAPKK mkk2. Phosphorylation is induced during asexual development. Phosphorylation is regulated by rlmA.

It carries out the reaction L-seryl-[protein] + ATP = O-phospho-L-seryl-[protein] + ADP + H(+). The enzyme catalyses L-threonyl-[protein] + ATP = O-phospho-L-threonyl-[protein] + ADP + H(+). Its activity is regulated as follows. Activated by threonine and tyrosine phosphorylation by the upstreamm MAPKK mkk2. Functionally, mitogen-activated protein kinase; part of cell wall integrity (CWI) signaling pathway composed of pkcA, the bck1-mkk2-mpka MAPK cascade and the downstream rlmA transcription regulator. The CWI signaling pathway regulates cell wall integrity and pyomelanin formation. CWI also controls oxidative stress response, gliotoxin production, iron adaptation and asexual development. Finally, CWI is constitutively required for A.fumigatus to cope with the temperature increase found in the mammalian lung environment, during infection. MpkA positively modulates the expression of fumiquinazoline cluster during conidiogenesis and directly phosphorylates fmqC, and perhaps also fmqA. This is Mitogen-activated protein kinase mpkA from Aspergillus fumigatus (strain ATCC MYA-4609 / CBS 101355 / FGSC A1100 / Af293) (Neosartorya fumigata).